The following is a 271-amino-acid chain: UPF0758 protein ACIAD3126 (271 aa).

Positions Asn-120–Leu-242 constitute an MPN domain. Residues His-191, His-193, and Asp-204 each contribute to the Zn(2+) site. Positions His-191 to Asp-204 match the JAMM motif motif.

It belongs to the UPF0758 family.

This chain is UPF0758 protein ACIAD3126, found in Acinetobacter baylyi (strain ATCC 33305 / BD413 / ADP1).